The primary structure comprises 158 residues: Transcription elongation factor GreA (158 aa).

Residues 53 to 75 are a coiled coil; it reads AKERQGQVEATIGDLEDKLSRAQ.

It belongs to the GreA/GreB family.

In terms of biological role, necessary for efficient RNA polymerase transcription elongation past template-encoded arresting sites. The arresting sites in DNA have the property of trapping a certain fraction of elongating RNA polymerases that pass through, resulting in locked ternary complexes. Cleavage of the nascent transcript by cleavage factors such as GreA or GreB allows the resumption of elongation from the new 3'terminus. GreA releases sequences of 2 to 3 nucleotides. The protein is Transcription elongation factor GreA of Sphingopyxis alaskensis (strain DSM 13593 / LMG 18877 / RB2256) (Sphingomonas alaskensis).